A 215-amino-acid chain; its full sequence is Putative lipoprotein NMB1124/NMB1162 (215 aa).

The N-terminal stretch at 1–16 (MKPLILGLAAVLALSA) is a signal peptide. A lipid anchor (N-palmitoyl cysteine) is attached at C17. C17 is lipidated: S-diacylglycerol cysteine.

Its subcellular location is the cell membrane. The polypeptide is Putative lipoprotein NMB1124/NMB1162 (Neisseria meningitidis serogroup B (strain ATCC BAA-335 / MC58)).